Here is a 701-residue protein sequence, read N- to C-terminus: Capsid protein VP1 (701 aa).

It belongs to the caliciviridae capsid protein family. As to quaternary structure, homodimer. Homomultimer. Interacts with the minor capsid protein VP2. May bind to VP3 and Vpg proteins. In terms of processing, cleaved by the viral protease to produce mature capsid protein.

The protein localises to the virion. It is found in the host cytoplasm. In terms of biological role, capsid protein self assembles to form an icosahedral capsid with a T=3 symmetry, about 38 nm in diameter, and consisting of 180 capsid proteins. A smaller form of capsid with a diameter of 23 nm might be capsid proteins assembled as icosahedron with T=1 symmetry. The capsid encapsulates the genomic RNA and is decorated with VP2 proteins. This Vesicular exanthema of swine virus serotype A48 (isolate Swine/United States/A48/1948) (VESV) protein is Capsid protein VP1.